A 105-amino-acid chain; its full sequence is Large ribosomal subunit protein eL36 (105 aa).

Lys62 carries the N6-acetyllysine modification.

It belongs to the eukaryotic ribosomal protein eL36 family. Component of the large ribosomal subunit.

It localises to the cytoplasm. The protein localises to the cytosol. Component of the large ribosomal subunit. The ribosome is a large ribonucleoprotein complex responsible for the synthesis of proteins in the cell. This chain is Large ribosomal subunit protein eL36 (Rpl36), found in Rattus norvegicus (Rat).